The sequence spans 353 residues: Dimethylsulfoniopropionate lyase 2 (353 aa).

Residues Cys125 and Cys274 each act as proton donor/acceptor in the active site. Residues 326-353 (DPNETDVSKGRPTKAEHRFGPEFEEMLQ) form a disordered region. Positions 331–346 (DVSKGRPTKAEHRFGP) are enriched in basic and acidic residues.

This sequence belongs to the aspartate/glutamate racemases family. ALMA1 subfamily. As to quaternary structure, homotetramer.

The catalysed reaction is S,S-dimethyl-beta-propiothetin = acrylate + dimethyl sulfide + H(+). Mediates cleavage of dimethylsulfoniopropionate (DMSP) into dimethyl sulfide (DMS) and acrylate. DMS is the principal form by which sulfur is transported from oceans to the atmosphere and is a key component of the ocean sulfur cycle. The sequence is that of Dimethylsulfoniopropionate lyase 2 from Emiliania huxleyi (strain CCMP1516).